The following is a 149-amino-acid chain: 3-dehydroquinate dehydratase (149 aa).

Tyr24 (proton acceptor) is an active-site residue. 3 residues coordinate substrate: Asn75, His81, and Asp88. The active-site Proton donor is His101. Residues Leu102 to Ser103 and Arg112 each bind substrate.

The protein belongs to the type-II 3-dehydroquinase family. As to quaternary structure, homododecamer.

The catalysed reaction is 3-dehydroquinate = 3-dehydroshikimate + H2O. It functions in the pathway metabolic intermediate biosynthesis; chorismate biosynthesis; chorismate from D-erythrose 4-phosphate and phosphoenolpyruvate: step 3/7. Catalyzes a trans-dehydration via an enolate intermediate. This Bartonella tribocorum (strain CIP 105476 / IBS 506) protein is 3-dehydroquinate dehydratase.